The primary structure comprises 287 residues: Toxin zeta (287 aa).

40 to 47 (GQPGSGKT) contributes to the ATP binding site. Positions 250-287 (MVQNQHQETPEFKAIQQKMESLQPPTPPIPKTPKLPGI) are disordered. The span at 273–287 (PPTPPIPKTPKLPGI) shows a compositional bias: pro residues.

Belongs to the zeta toxin family. In terms of assembly, in the presence of the epsilon antitoxin, forms an inactive PezA(2)PezT(2) heterotetramer.

The enzyme catalyses UDP-N-acetyl-alpha-D-glucosamine + ATP = UDP-N-acetyl-alpha-D-glucosamine 3'-phosphate + ADP + H(+). Toxic component of a type II toxin-antitoxin (TA) system. Phosphorylates UDP-N-acetyl-D-glucosamine (UNAG) on the 3'-hydroxyl group of the N-acetyl-D-glucosamine moiety, yielding UNAG-3P. UNAG-3P inhibits MurA, the first committed step in cell wall synthesis, which is then blocked. Phosphorylation is inhibited by cognate epsilon antitoxin. Part of a postsegregational killing (PSK) system involved in the killing of plasmid-free cells. The zeta toxin induces programmed cell death. In Streptococcus agalactiae, this protein is Toxin zeta.